An 87-amino-acid chain; its full sequence is Small ribosomal subunit protein bS20 (87 aa).

The protein belongs to the bacterial ribosomal protein bS20 family.

In terms of biological role, binds directly to 16S ribosomal RNA. The chain is Small ribosomal subunit protein bS20 from Geobacter sulfurreducens (strain ATCC 51573 / DSM 12127 / PCA).